The sequence spans 203 residues: Recombination protein RecR (203 aa).

The segment at 56–71 (CAVCGNVSDDERCRIC) adopts a C4-type zinc-finger fold. In terms of domain architecture, Toprim spans 79 to 179 (SVVCVVEEPK…TVTRIASGLP (101 aa)).

Belongs to the RecR family.

Functionally, may play a role in DNA repair. It seems to be involved in an RecBC-independent recombinational process of DNA repair. It may act with RecF and RecO. This is Recombination protein RecR from Mycobacterium avium (strain 104).